Consider the following 248-residue polypeptide: MRTAIIAGNWKMNKTVKEAVELVKELKPLVKDAKCDVVVCPTYVCLPAVLEEVKGSNIKVGAQNMHFEESGAYTGEISPKMLEELGVHYVIIGHSERRQYFNETDETVNKKVKKAFEHNLIPIVCCGESLEQREGNVTEKVLEGQIKVDLKELSKEQVEKLVIAYEPIWAIGTGKTATDEQANETIGYIRTVVKSMYGEDVASKVRIQYGGSVKPGTIKAQMAKEEIDGALVGGASLKAEDFSAIVNF.

9–11 lines the substrate pocket; it reads NWK. The active-site Electrophile is the H94. E166 acts as the Proton acceptor in catalysis. Residues G172, S212, and 233–234 each bind substrate; that span reads GG.

The protein belongs to the triosephosphate isomerase family. As to quaternary structure, homodimer.

It is found in the cytoplasm. It carries out the reaction D-glyceraldehyde 3-phosphate = dihydroxyacetone phosphate. Its pathway is carbohydrate biosynthesis; gluconeogenesis. It participates in carbohydrate degradation; glycolysis; D-glyceraldehyde 3-phosphate from glycerone phosphate: step 1/1. Involved in the gluconeogenesis. Catalyzes stereospecifically the conversion of dihydroxyacetone phosphate (DHAP) to D-glyceraldehyde-3-phosphate (G3P). This is Triosephosphate isomerase from Clostridium botulinum (strain Loch Maree / Type A3).